Consider the following 321-residue polypeptide: Isoaspartyl peptidase (321 aa).

The active-site Nucleophile is threonine 179. Substrate contacts are provided by residues 207–210 and 230–233; these read RVGD and TGTG.

Belongs to the Ntn-hydrolase family. Heterotetramer of two alpha and two beta chains arranged as a dimer of alpha/beta heterodimers. In terms of processing, autocleaved. Generates the alpha and beta subunits. The N-terminal residue of the beta subunit is thought to be responsible for the nucleophile hydrolase activity. Both subunits undergo further processing at their C-termini. The overexpressed alpha subunit seems to consist of residues 2-161, with an oxidized Met residue and a tightly coordinated Na(+), whereas the overexpressed beta subunit is processed to residue 315 and has 3 oxidized Met residues. Processing of the alpha subunit is inhibited by Zn(2+).

The enzyme catalyses Cleavage of a beta-linked Asp residue from the N-terminus of a polypeptide.. In terms of biological role, degrades proteins damaged by L-isoaspartyl residue formation (also known as beta-Asp residues). Degrades L-isoaspartyl-containing di- and maybe also tripeptides. Also has L-asparaginase activity, although this may not be its principal function. Its function is as follows. May be involved in glutathione, and possibly other peptide, transport, although these results could also be due to polar effects of disruption. This chain is Isoaspartyl peptidase (iaaA), found in Escherichia coli (strain K12).